The chain runs to 500 residues: 4-aminobutyrate aminotransferase, mitochondrial (500 aa).

The N-terminal 28 residues, 1-28 (MASVLLTRRLACSFRHNHRLLVPGWRHI), are a transit peptide targeting the mitochondrion. Residue Cys-163 coordinates [2Fe-2S] cluster. Residue 164-165 (GS) coordinates pyridoxal 5'-phosphate. Cys-166 contacts [2Fe-2S] cluster. Arg-220 lines the substrate pocket. Lys-231 carries the N6-succinyllysine modification. Residue Lys-252 is modified to N6-acetyllysine; alternate. Lys-252 bears the N6-succinyllysine; alternate mark. Residues Lys-279 and Lys-318 each carry the N6-acetyllysine modification. N6-(pyridoxal phosphate)lysine is present on Lys-357. Position 381 (Thr-381) interacts with pyridoxal 5'-phosphate. N6-acetyllysine; alternate is present on Lys-413. Lys-413 bears the N6-succinyllysine; alternate mark. Lys-452 and Lys-470 each carry N6-acetyllysine.

Belongs to the class-III pyridoxal-phosphate-dependent aminotransferase family. Homodimer; disulfide-linked. Pyridoxal 5'-phosphate serves as cofactor. It depends on [2Fe-2S] cluster as a cofactor.

Its subcellular location is the mitochondrion matrix. The catalysed reaction is 4-aminobutanoate + 2-oxoglutarate = succinate semialdehyde + L-glutamate. It carries out the reaction (S)-3-amino-2-methylpropanoate + 2-oxoglutarate = 2-methyl-3-oxopropanoate + L-glutamate. In terms of biological role, catalyzes the conversion of gamma-aminobutyrate and L-beta-aminoisobutyrate to succinate semialdehyde and methylmalonate semialdehyde, respectively. Can also convert delta-aminovalerate and beta-alanine. In Sus scrofa (Pig), this protein is 4-aminobutyrate aminotransferase, mitochondrial (ABAT).